A 54-amino-acid polypeptide reads, in one-letter code: Small ribosomal subunit protein uS14 (54 aa).

Zn(2+) contacts are provided by cysteine 19, cysteine 22, cysteine 37, and cysteine 40.

This sequence belongs to the universal ribosomal protein uS14 family. Zinc-binding uS14 subfamily. In terms of assembly, part of the 30S ribosomal subunit. Zn(2+) serves as cofactor.

Binds 16S rRNA, required for the assembly of 30S particles. The protein is Small ribosomal subunit protein uS14 of Saccharolobus solfataricus (strain ATCC 35092 / DSM 1617 / JCM 11322 / P2) (Sulfolobus solfataricus).